The primary structure comprises 155 residues: MAETETESITTSSPPPISETENSTTLPTTETEKNPNPVTISLRIWPPTQKTRDAVINRLIETLSTESILSKRFGSLESEEASSVAKSIEDEAYAIASATVFGDDDGIEILKAYSKEISKRMLESVKAKSNVASPPPKDGDGIESAVDSKIDSSEA.

Disordered stretches follow at residues 1–41 (MAET…VTIS) and 124–155 (SVKA…SSEA). Over residues 7 to 39 (ESITTSSPPPISETENSTTLPTTETEKNPNPVT) the composition is skewed to low complexity. Residues 28 to 131 (TTETEKNPNP…LESVKAKSNV (104 aa)) form a WPP region. Residues 146–155 (VDSKIDSSEA) show a composition bias toward basic and acidic residues.

In terms of assembly, binds to FPP proteins. Interacts with WAP, WIP1, WIP2 and WIP3 through its WPP domain. Interacts with HSP70-1, HSP70-3 and WIT1. Component of a ternary complex composed of WPP1, HSP70-1 and WIT1. Expressed in roots, stems and leaves.

The protein resides in the nucleus envelope. It is found in the cytoplasm. The protein localises to the nucleus. It localises to the golgi apparatus. Its subcellular location is the nucleus matrix. Its function is as follows. Regulates the mitotic activity in roots. Plays a role with HSP70-1 in facilitating WIT1 nuclear envelope targeting. The chain is WPP domain-containing protein 1 (WPP1) from Arabidopsis thaliana (Mouse-ear cress).